The chain runs to 270 residues: F-actin-capping protein subunit beta (270 aa).

Polar residues predominate over residues 245-258; sequence QTRSQKSTTDSQEQ. The interval 245–270 is disordered; sequence QTRSQKSTTDSQEQQQKEVIKGLQNL.

Belongs to the F-actin-capping protein beta subunit family. As to quaternary structure, component of the F-actin capping complex, composed of a heterodimer of an alpha and a beta subunit.

The protein resides in the cytoplasm. It localises to the cytoskeleton. It is found in the actin patch. In terms of biological role, F-actin-capping proteins bind in a Ca(2+)-independent manner to the fast growing ends of actin filaments (barbed end) thereby blocking the exchange of subunits at these ends. Unlike other capping proteins (such as gelsolin and severin), these proteins do not sever actin filaments. The chain is F-actin-capping protein subunit beta (CAP2) from Candida glabrata (strain ATCC 2001 / BCRC 20586 / JCM 3761 / NBRC 0622 / NRRL Y-65 / CBS 138) (Yeast).